Consider the following 671-residue polypeptide: Major S-layer protein (671 aa).

The N-terminal stretch at Met1–Ala24 is a signal peptide. Residues Asn36, Asn70, Asn116, and Asn350 are each glycosylated (N-linked (GlcNAc...) asparagine). Positions Gly594 to Gly650 are disordered. The span at Thr613–Pro622 shows a compositional bias: acidic residues. Residues Thr623–Glu633 are compositionally biased toward low complexity. Residues Pro634–Glu643 are compositionally biased toward acidic residues. The chain crosses the membrane as a helical span at residues Thr647–Val667.

Belongs to the Methanosarcinales S-layer protein family. Post-translationally, glycosylated.

It localises to the secreted. The protein localises to the cell wall. It is found in the S-layer. Its subcellular location is the cell membrane. S-layer protein. The S-layer is a paracrystalline mono-layered assembly of proteins which coat the surface of the cell. The polypeptide is Major S-layer protein (Methanosarcina acetivorans (strain ATCC 35395 / DSM 2834 / JCM 12185 / C2A)).